A 359-amino-acid chain; its full sequence is Putative nucleotidyltransferase MAB21L1 (359 aa).

A ribonucleoside 5'-triphosphate is bound by residues 23–24 (RK) and 63–66 (YEGL). Glu73 and Glu75 together coordinate Mg(2+). A ribonucleoside 5'-triphosphate is bound by residues Lys248 and 252 to 255 (SLLK).

This sequence belongs to the mab-21 family. Monomer. Homodecamer; composed of 2 back to back homopentamers. The protein may exist as monomer in solution and oiligomerizes upon ligand binding.

It is found in the nucleus. Putative nucleotidyltransferase required for several aspects of embryonic development including normal development of the eye. It is unclear whether it displays nucleotidyltransferase activity in vivo. Binds single-stranded RNA (ssRNA). This Xenopus tropicalis (Western clawed frog) protein is Putative nucleotidyltransferase MAB21L1 (mab21l1).